An 88-amino-acid chain; its full sequence is Large ribosomal subunit protein eL31 (88 aa).

It belongs to the eukaryotic ribosomal protein eL31 family.

This chain is Large ribosomal subunit protein eL31 (rpl31e), found in Archaeoglobus fulgidus (strain ATCC 49558 / DSM 4304 / JCM 9628 / NBRC 100126 / VC-16).